The sequence spans 312 residues: Translation initiation factor IF3-2, chloroplastic (312 aa).

A chloroplast-targeting transit peptide spans 1-55; sequence MAGITSSTVGFNAVFTGITKTVSSHSLFSVDSKLCSLRLSKTELSFTNLTPSPRR. Positions 253–263 are enriched in basic and acidic residues; the sequence is EMIRKPQEPPT. The interval 253-312 is disordered; that stretch reads EMIRKPQEPPTRKKKKTAENEASASAAEITAEPEPEPEPEPEPEPEPEPEPEPEPLQIDS. Positions 272 to 282 are enriched in low complexity; the sequence is NEASASAAEIT. The segment covering 283 to 305 has biased composition (acidic residues); it reads AEPEPEPEPEPEPEPEPEPEPEP.

Belongs to the IF-3 family. As to quaternary structure, monomer. Highly expressed in young, newly emerged leaves.

The protein resides in the plastid. Its subcellular location is the chloroplast. Its function is as follows. Chloroplast translation initiation factor that is essential for the coordination of leaf and chloroplast development. IF-3 binds to the 30S ribosomal subunit and shifts the equilibrium between 70S ribosomes and their 50S and 30S subunits in favor of the free subunits, thus enhancing the availability of 30S subunits on which protein synthesis initiation begins. The sequence is that of Translation initiation factor IF3-2, chloroplastic from Arabidopsis thaliana (Mouse-ear cress).